The following is a 219-amino-acid chain: Probable nicotinate-nucleotide adenylyltransferase (219 aa).

This sequence belongs to the NadD family.

It catalyses the reaction nicotinate beta-D-ribonucleotide + ATP + H(+) = deamido-NAD(+) + diphosphate. It functions in the pathway cofactor biosynthesis; NAD(+) biosynthesis; deamido-NAD(+) from nicotinate D-ribonucleotide: step 1/1. In terms of biological role, catalyzes the reversible adenylation of nicotinate mononucleotide (NaMN) to nicotinic acid adenine dinucleotide (NaAD). The sequence is that of Probable nicotinate-nucleotide adenylyltransferase from Herminiimonas arsenicoxydans.